We begin with the raw amino-acid sequence, 366 residues long: Putative F-box protein At1g26515 (366 aa).

The disordered stretch occupies residues 1-20 (MKTRSKKTKTENNQEKSKEK). Residues 8-20 (TKTENNQEKSKEK) are compositionally biased toward basic and acidic residues. The F-box domain occupies 20–66 (KNKFDQLPLDLEIEIFRRLPLKSVARFLTLSKSCAATIRSPSFITSF).

In Arabidopsis thaliana (Mouse-ear cress), this protein is Putative F-box protein At1g26515.